The chain runs to 338 residues: Ketol-acid reductoisomerase (NADP(+)) (338 aa).

The region spanning 1-181 (MQIYYDKDAD…GGGRAGIIET (181 aa)) is the KARI N-terminal Rossmann domain. Residues 24–27 (YGSQ), R47, S50, S52, and 82–85 (DEHQ) each bind NADP(+). The active site involves H107. NADP(+) is bound at residue G133. In terms of domain architecture, KARI C-terminal knotted spans 182 to 327 (TFREETETDL…ARLRDMMPWI (146 aa)). Mg(2+) is bound by residues D190, E194, E226, and E230. S251 contributes to the substrate binding site.

This sequence belongs to the ketol-acid reductoisomerase family. It depends on Mg(2+) as a cofactor.

It catalyses the reaction (2R)-2,3-dihydroxy-3-methylbutanoate + NADP(+) = (2S)-2-acetolactate + NADPH + H(+). The enzyme catalyses (2R,3R)-2,3-dihydroxy-3-methylpentanoate + NADP(+) = (S)-2-ethyl-2-hydroxy-3-oxobutanoate + NADPH + H(+). Its pathway is amino-acid biosynthesis; L-isoleucine biosynthesis; L-isoleucine from 2-oxobutanoate: step 2/4. It participates in amino-acid biosynthesis; L-valine biosynthesis; L-valine from pyruvate: step 2/4. Its function is as follows. Involved in the biosynthesis of branched-chain amino acids (BCAA). Catalyzes an alkyl-migration followed by a ketol-acid reduction of (S)-2-acetolactate (S2AL) to yield (R)-2,3-dihydroxy-isovalerate. In the isomerase reaction, S2AL is rearranged via a Mg-dependent methyl migration to produce 3-hydroxy-3-methyl-2-ketobutyrate (HMKB). In the reductase reaction, this 2-ketoacid undergoes a metal-dependent reduction by NADPH to yield (R)-2,3-dihydroxy-isovalerate. This is Ketol-acid reductoisomerase (NADP(+)) from Methylococcus capsulatus (strain ATCC 33009 / NCIMB 11132 / Bath).